The following is a 261-amino-acid chain: Small ribosomal subunit protein uS2 (261 aa).

The interval 223–261 (EGKQGQDDSEDVEKEMADKAAAEDDEEESIEVVVEKSED) is disordered.

Belongs to the universal ribosomal protein uS2 family.

This chain is Small ribosomal subunit protein uS2, found in Lactobacillus johnsonii (strain CNCM I-12250 / La1 / NCC 533).